Reading from the N-terminus, the 852-residue chain is Bifunctional isopimaradiene synthase, chloroplastic (852 aa).

A chloroplast-targeting transit peptide spans 1 to 53; it reads HHLTANTQSIPHFSTTLNAGSSARKRRSLYLRWGKGSNKIIACVGEGATSVPY. Lys-252 is a binding site for substrate. Mg(2+) is bound by residues Asp-385 and Asp-387. The short motif at 385–388 is the DXDD motif element; that stretch reads DIDD. Lys-472 is a substrate binding site. Mg(2+)-binding residues include Asp-604, Asp-608, Asn-748, Thr-752, and Glu-756. Positions 604 to 608 match the DDXXD motif motif; that stretch reads DDLYD.

It belongs to the terpene synthase family. Tpsd subfamily. Requires Mg(2+) as cofactor.

It is found in the plastid. The protein resides in the chloroplast. It carries out the reaction (2E,6E,10E)-geranylgeranyl diphosphate = (+)-copalyl diphosphate. The catalysed reaction is (+)-copalyl diphosphate = isopimara-7,15-diene + diphosphate. The protein operates within terpene metabolism; oleoresin biosynthesis. Involved in defensive oleoresin formation in conifers in response to insect attack or other injury. Involved in diterpene (C20) olefins biosynthesis. Bifunctional enzyme that catalyzes two sequential cyclizations of geranylgeranyl diphosphate (GGPP) to isopimara-7,15-diene. In Abies balsamea (Balsam fir), this protein is Bifunctional isopimaradiene synthase, chloroplastic (TPS-ISO).